A 296-amino-acid chain; its full sequence is Enoyl-CoA hydratase domain-containing protein 2, mitochondrial (296 aa).

At Lys-101 the chain carries N6-acetyllysine; alternate. Position 101 is an N6-succinyllysine; alternate (Lys-101).

The protein belongs to the enoyl-CoA hydratase/isomerase family.

It is found in the mitochondrion. In Bos taurus (Bovine), this protein is Enoyl-CoA hydratase domain-containing protein 2, mitochondrial (ECHDC2).